A 288-amino-acid chain; its full sequence is Protein RepA (288 aa).

This sequence belongs to the initiator RepB protein family.

In terms of biological role, this protein is essential for plasmid replication; it is involved in copy control functions. This is Protein RepA (repA) from Escherichia coli.